A 779-amino-acid polypeptide reads, in one-letter code: MDAYWRAANYLSVGQIYLRDNPLLKQKLTLADVKPRLLGHWGTTPGLNFLYVHLNRLIQTHDLNMIYVTGPGHGGPGLVANTYLEGTYSELYPEVSQDEAGIKRLFTQFSYPGGIPSHVAAEVPGSINEGGELGYCLMHAYGAVFDNPDLIAACVVGDGEAETGALATSWHSNKFLNPARDGAVLPILHLNGYKIANPTVLARISHDELEALFMGYGYEPLFVEGADPRQMHQLMASALDKAHGKIAEIQRQARSRGFSDRPAWPMIIFRSPKGWTGPREVDGKKTEGTWRSHQVPLAKLAEVPAHLGILEEWLKSYRPWELFDESGSLRPELRELAPKGERRMGANPHANGGLLLKDLNLPDFRQYAVEIGIPGTVTAESTRTAGLYLRDVMKLNAQERNFRIFGPDETESNRLSPVFQETDRVFTGDILASDMQLSPDGRVMEVLSEQLCQGWLEGYLLTGRHGFFSCYEAFIHIVDSMFNQHAKWLKVCREVPWRKPIASLTYLLTSHVWRQDHNGFSHQDPGFIDHVANKKADIIRVYLPPDANTLLSVVDHCARSRDYINVIVAGKQPQLQWLDMGAAVAHCRAGLGVWEWASNDEGDPDAVVACAGDVPTMEALAAVMIVREAFPSLRLRVVNVVDLMALQAPSQHPHGIADDAFDRMFTTDKPVIFAYHGYPGLIHRLTYRRTNHANFHVHGYQEEGTTTTPFDMAVLNKLDRFHLAKAVVERVPSLASPREGFAHFVESKLAEHDAYIRENGEDLPEIRNWRWLASAVDAQ.

This sequence belongs to the XFP family. It depends on thiamine diphosphate as a cofactor.

This chain is Probable phosphoketolase 2, found in Rhizobium meliloti (strain 1021) (Ensifer meliloti).